We begin with the raw amino-acid sequence, 159 residues long: Transcriptional repressor NrdR (159 aa).

Residues 3 to 34 (CPFCNAADSKVIDSRLAAEGCQIRRRRECISC) fold into a zinc finger. In terms of domain architecture, ATP-cone spans 49–139 (PRVIKSNGKN…VYQDFQDVEA (91 aa)).

This sequence belongs to the NrdR family. Requires Zn(2+) as cofactor.

Its function is as follows. Negatively regulates transcription of bacterial ribonucleotide reductase nrd genes and operons by binding to NrdR-boxes. The protein is Transcriptional repressor NrdR of Acinetobacter baylyi (strain ATCC 33305 / BD413 / ADP1).